Consider the following 275-residue polypeptide: Dermonecrotic toxin LhSicTox-alphaVI1ii (275 aa).

Histidine 5 is an active-site residue. 2 residues coordinate Mg(2+): glutamate 25 and aspartate 27. Residue histidine 41 is the Nucleophile of the active site. Cystine bridges form between cysteine 45–cysteine 51 and cysteine 47–cysteine 192. Aspartate 85 is a Mg(2+) binding site.

Belongs to the arthropod phospholipase D family. Class II subfamily. It depends on Mg(2+) as a cofactor. In terms of tissue distribution, expressed by the venom gland.

It is found in the secreted. It catalyses the reaction an N-(acyl)-sphingosylphosphocholine = an N-(acyl)-sphingosyl-1,3-cyclic phosphate + choline. The catalysed reaction is an N-(acyl)-sphingosylphosphoethanolamine = an N-(acyl)-sphingosyl-1,3-cyclic phosphate + ethanolamine. It carries out the reaction a 1-acyl-sn-glycero-3-phosphocholine = a 1-acyl-sn-glycero-2,3-cyclic phosphate + choline. The enzyme catalyses a 1-acyl-sn-glycero-3-phosphoethanolamine = a 1-acyl-sn-glycero-2,3-cyclic phosphate + ethanolamine. Dermonecrotic toxins cleave the phosphodiester linkage between the phosphate and headgroup of certain phospholipids (sphingolipid and lysolipid substrates), forming an alcohol (often choline) and a cyclic phosphate. This toxin acts on sphingomyelin (SM). It may also act on ceramide phosphoethanolamine (CPE), lysophosphatidylcholine (LPC) and lysophosphatidylethanolamine (LPE), but not on lysophosphatidylserine (LPS), and lysophosphatidylglycerol (LPG). It acts by transphosphatidylation, releasing exclusively cyclic phosphate products as second products. Induces dermonecrosis, hemolysis, increased vascular permeability, edema, inflammatory response, and platelet aggregation. The sequence is that of Dermonecrotic toxin LhSicTox-alphaVI1ii from Loxosceles hirsuta (Recluse spider).